The sequence spans 463 residues: Argininosuccinate lyase (463 aa).

It belongs to the lyase 1 family. Argininosuccinate lyase subfamily.

It localises to the cytoplasm. It carries out the reaction 2-(N(omega)-L-arginino)succinate = fumarate + L-arginine. Its pathway is amino-acid biosynthesis; L-arginine biosynthesis; L-arginine from L-ornithine and carbamoyl phosphate: step 3/3. This is Argininosuccinate lyase from Bacillus cereus (strain AH187).